The following is a 1144-amino-acid chain: Ribonucleoside-diphosphate reductase large subunit (1144 aa).

The tract at residues 1–33 is disordered; the sequence is MANRPAASALAGARSPSERQEPREPEVAPPGGD. Positions 16–26 are enriched in basic and acidic residues; it reads PSERQEPREPE. The RIP homotypic interaction motif (RHIM) motif lies at 55–75; sequence AYRISDSSFVQCGSNCSMIID. The tract at residues 118–324 is disordered; that stretch reads SGPSATTSVG…TDPGYPVPLE (207 aa). Over residues 119 to 132 the composition is skewed to polar residues; it reads GPSATTSVGTQTSG. Over residues 141–159 the composition is skewed to pro residues; that stretch reads TPEPQGPQAVPPPPPPPFP. The segment covering 164–179 has biased composition (basic and acidic residues); that stretch reads CCARRDARGGAEKDVG. The span at 192-204 shows a compositional bias: acidic residues; the sequence is SETEDSDSSDEDT. 2 stretches are compositionally biased toward low complexity: residues 205–216 and 279–305; these read GSGSETLSRSSS and GSAT…DVAP. Residues Thr573, 588–589, Gly619, 798–802, and 975–979 each bind substrate; these read SC, NLCTE, and PTAAS. A disulfide bridge connects residues Cys589 and Cys815. Asn798 (proton acceptor) is an active-site residue. The Cysteine radical intermediate role is filled by Cys800. Glu802 serves as the catalytic Proton acceptor.

It belongs to the ribonucleoside diphosphate reductase large chain family. In terms of assembly, heterotetramer composed of a homodimer of the large subunit (R1) and a homodimer of the small subunit (R2). Larger multisubunit protein complex are also active, composed of (R1)n(R2)n. May self-assemble (via RIP homotypic interaction motif/RHIM) into homomeric fibrillar amyloid structures. Interacts (via RHIM) with human RIPK1 (via RHIM). Interacts (via RHIM) with human RIPK3 (via RHIM). May interact (via RHIM) with human ZBP1 (via RHIM). Interacts (via C-terminus) with host CASP8.

The enzyme catalyses a 2'-deoxyribonucleoside 5'-diphosphate + [thioredoxin]-disulfide + H2O = a ribonucleoside 5'-diphosphate + [thioredoxin]-dithiol. In terms of biological role, ribonucleoside-diphosphate reductase holoenzyme that provides the precursors necessary for viral DNA synthesis. Allows virus growth in non-dividing cells, as well as reactivation from latency in infected hosts. Catalyzes the biosynthesis of deoxyribonucleotides from the corresponding ribonucleotides. The N-terminal region confers antiapoptotic activity in differentiated cells such as neurons and is important for viral reactivation to increase neural survivability. Prevents host necroptosis by targeting host RIPK1 and RIPK3, thereby hampering the formation of necroptotic RIPK1-RIPK3 complexes. May form hetero-amyloid structures with host proteins RIPK3 or ZBP1, thereby preventing RIPK3- and ZBP1-mediated necroptosis. In addition, inhibits extrinsic apoptosis by targeting host CASP8. This is Ribonucleoside-diphosphate reductase large subunit from Homo sapiens (Human).